Consider the following 221-residue polypeptide: Thiamine-phosphate synthase (221 aa).

Residues 44–48 (QFREK) and N79 each bind 4-amino-2-methyl-5-(diphosphooxymethyl)pyrimidine. 2 residues coordinate Mg(2+): D80 and D99. Residue S117 coordinates 4-amino-2-methyl-5-(diphosphooxymethyl)pyrimidine. 143–145 (TSS) contacts 2-[(2R,5Z)-2-carboxy-4-methylthiazol-5(2H)-ylidene]ethyl phosphate. K146 contributes to the 4-amino-2-methyl-5-(diphosphooxymethyl)pyrimidine binding site. Residues G175 and 195 to 196 (IS) each bind 2-[(2R,5Z)-2-carboxy-4-methylthiazol-5(2H)-ylidene]ethyl phosphate.

It belongs to the thiamine-phosphate synthase family. It depends on Mg(2+) as a cofactor.

The catalysed reaction is 2-[(2R,5Z)-2-carboxy-4-methylthiazol-5(2H)-ylidene]ethyl phosphate + 4-amino-2-methyl-5-(diphosphooxymethyl)pyrimidine + 2 H(+) = thiamine phosphate + CO2 + diphosphate. The enzyme catalyses 2-(2-carboxy-4-methylthiazol-5-yl)ethyl phosphate + 4-amino-2-methyl-5-(diphosphooxymethyl)pyrimidine + 2 H(+) = thiamine phosphate + CO2 + diphosphate. It catalyses the reaction 4-methyl-5-(2-phosphooxyethyl)-thiazole + 4-amino-2-methyl-5-(diphosphooxymethyl)pyrimidine + H(+) = thiamine phosphate + diphosphate. The protein operates within cofactor biosynthesis; thiamine diphosphate biosynthesis; thiamine phosphate from 4-amino-2-methyl-5-diphosphomethylpyrimidine and 4-methyl-5-(2-phosphoethyl)-thiazole: step 1/1. In terms of biological role, condenses 4-methyl-5-(beta-hydroxyethyl)thiazole monophosphate (THZ-P) and 2-methyl-4-amino-5-hydroxymethyl pyrimidine pyrophosphate (HMP-PP) to form thiamine monophosphate (TMP). This Geobacillus kaustophilus (strain HTA426) protein is Thiamine-phosphate synthase.